The chain runs to 470 residues: Growth/differentiation factor 6 (470 aa).

Positions 1–22 are cleaved as a signal peptide; that stretch reads MDTSRVLLSAVFLISFLWDLPG. The propeptide occupies 23–350; that stretch reads FQQASISSSS…SPSPGRRRRR (328 aa). The disordered stretch occupies residues 28-98; that stretch reads ISSSSSSAEL…REPPGRGPRV (71 aa). Residues 45-80 show a composition bias toward basic and acidic residues; it reads SRKEGRMPRAPRENATAREPLDRQEPPPRPQEEPQR. The N-linked (GlcNAc...) asparagine glycan is linked to Asn120. Disordered regions lie at residues 247-272 and 308-366; these read PGAA…SLGF and TEVV…KKSR. Positions 321–333 are enriched in pro residues; it reads GPPPPPPPPPPSG. Positions 345–366 are enriched in basic residues; it reads GRRRRRTAFASRHGKRHGKKSR. Cystine bridges form between Cys369–Cys435, Cys398–Cys467, and Cys402–Cys469.

The protein belongs to the TGF-beta family. As to quaternary structure, homodimer; disulfide-linked.

Its subcellular location is the secreted. In terms of biological role, growth factor that controls proliferation and cellular differentiation in the retina and bone formation. Plays a key role in regulating apoptosis during retinal development. Establishes dorsal-ventral positional information in the retina and controls the formation of the retinotectal map. Required for normal formation of bones and joints in the limbs, skull, digits and axial skeleton. Plays a key role in establishing boundaries between skeletal elements during development. Regulation of GDF6 expression seems to be a mechanism for evolving species-specific changes in skeletal structures. Seems to positively regulate differentiation of chondrogenic tissue through the growth factor receptors subunits BMPR1A, BMPR1B, BMPR2 and ACVR2A, leading to the activation of SMAD1-SMAD5-SMAD8 complex. The regulation of chondrogenic differentiation is inhibited by NOG. Also involved in the induction of adipogenesis from mesenchymal stem cells. This mechanism acts through the growth factor receptors subunits BMPR1A, BMPR2 and ACVR2A and the activation of SMAD1-SMAD5-SMAD8 complex and MAPK14/p38. This chain is Growth/differentiation factor 6 (GDF6), found in Bos taurus (Bovine).